A 161-amino-acid chain; its full sequence is MSVVTKSIVNADAEARYLSPGELDRIKNFVSTGERRLRIAQTLTENRERIVKQAGDQLFQKRPDVVSPGGNAYGEEMTATCLRDLDYYLRLVTYGIVAGDVTPIEEIGLVGVREMYNSLGTPIPAVAEGIRAMKNVACSLLSAEDAAEAGSYFDFVIGAMQ.

N71 bears the N4-methylasparagine mark. C81 lines the (2R,3E)-phycocyanobilin pocket.

The protein belongs to the phycobiliprotein family. In terms of assembly, heterodimer of an alpha and a beta chain. Contains one covalently linked phycocyanobilin chromophore.

It is found in the cellular thylakoid membrane. Functionally, light-harvesting photosynthetic bile pigment-protein from the phycobiliprotein complex. Allophycocyanin has a maximum absorption at approximately 650 nanometers. This is Allophycocyanin alpha chain (apcA) from Thermosynechococcus vestitus (strain NIES-2133 / IAM M-273 / BP-1).